We begin with the raw amino-acid sequence, 875 residues long: Translation initiation factor IF-2 (875 aa).

Disordered regions lie at residues 123–204 and 240–278; these read EKEK…EKPK and ETKEEKAELEALRKLMGPQPKKKKKKKKKKEEEKAPVET. A compositionally biased stretch (basic and acidic residues) spans 240-252; it reads ETKEEKAELEALR. Over residues 259–268 the composition is skewed to basic residues; sequence PKKKKKKKKK. Residues 269–278 are compositionally biased toward basic and acidic residues; the sequence is KEEEKAPVET. The tr-type G domain maps to 379 to 547; sequence ERPPVVTVMG…NILLVSEILE (169 aa). Residues 388–395 form a G1 region; sequence GHVDHGKT. Residue 388–395 participates in GTP binding; sequence GHVDHGKT. Residues 413-417 form a G2 region; sequence GITQH. The interval 435-438 is G3; sequence DTPG. GTP-binding positions include 435–439 and 489–492; these read DTPGH and NKID. The segment at 489 to 492 is G4; that stretch reads NKID. The tract at residues 525-527 is G5; the sequence is SAK.

Belongs to the TRAFAC class translation factor GTPase superfamily. Classic translation factor GTPase family. IF-2 subfamily.

Its subcellular location is the cytoplasm. In terms of biological role, one of the essential components for the initiation of protein synthesis. Protects formylmethionyl-tRNA from spontaneous hydrolysis and promotes its binding to the 30S ribosomal subunits. Also involved in the hydrolysis of GTP during the formation of the 70S ribosomal complex. The polypeptide is Translation initiation factor IF-2 (Persephonella marina (strain DSM 14350 / EX-H1)).